Consider the following 206-residue polypeptide: Large ribosomal subunit protein uL4 (206 aa).

The disordered stretch occupies residues 46 to 78 (GNRAQKDREQVKHTTKKPWRQKGTGRARAGMSS). Positions 58 to 70 (HTTKKPWRQKGTG) are enriched in basic residues.

This sequence belongs to the universal ribosomal protein uL4 family. As to quaternary structure, part of the 50S ribosomal subunit.

In terms of biological role, one of the primary rRNA binding proteins, this protein initially binds near the 5'-end of the 23S rRNA. It is important during the early stages of 50S assembly. It makes multiple contacts with different domains of the 23S rRNA in the assembled 50S subunit and ribosome. Its function is as follows. Forms part of the polypeptide exit tunnel. The polypeptide is Large ribosomal subunit protein uL4 (Burkholderia cenocepacia (strain ATCC BAA-245 / DSM 16553 / LMG 16656 / NCTC 13227 / J2315 / CF5610) (Burkholderia cepacia (strain J2315))).